We begin with the raw amino-acid sequence, 196 residues long: MTQRIIGLTGGIATGKTTVANYLASAHHLPIFDADIYARDAVSLGSPILDAIAGRYGKEILLPDGSLNRPKLGEIIFQNQDERHWLESLIHPYVRDRFLKAIAESTSPILVLVIPLLIEVQMTNLVTEIWVVICSESQQLQRLMERNHLTLEQAQARINSQLSLKEKAAIADVVLDNSSSLESLLKQVDIALNFEL.

The 192-residue stretch at 5–196 (IIGLTGGIAT…QVDIALNFEL (192 aa)) folds into the DPCK domain. 13 to 18 (ATGKTT) is a binding site for ATP.

Belongs to the CoaE family.

Its subcellular location is the cytoplasm. The enzyme catalyses 3'-dephospho-CoA + ATP = ADP + CoA + H(+). It participates in cofactor biosynthesis; coenzyme A biosynthesis; CoA from (R)-pantothenate: step 5/5. Catalyzes the phosphorylation of the 3'-hydroxyl group of dephosphocoenzyme A to form coenzyme A. The polypeptide is Dephospho-CoA kinase (Trichormus variabilis (strain ATCC 29413 / PCC 7937) (Anabaena variabilis)).